The chain runs to 148 residues: Snaclec 4 (148 aa).

The first 23 residues, 1 to 23, serve as a signal peptide directing secretion; the sequence is MGRFIFVSFSLLVVFFSLSGTEA. A C-type lectin domain is found at 34-148; sequence YDQNCYKAFE…DTQFRLQEPG (115 aa).

The protein belongs to the snaclec family. In terms of assembly, heterodimer; disulfide-linked. Contains disulfide bonds. In terms of tissue distribution, expressed by the venom gland.

The protein localises to the secreted. Its function is as follows. Interferes with one step of hemostasis (modulation of platelet aggregation, or coagulation cascade, for example). This chain is Snaclec 4, found in Echis pyramidum leakeyi (Leakey's carpet viper).